Consider the following 469-residue polypeptide: Endoplasmic reticulum oxidoreductin-1 (469 aa).

A signal peptide spans 1 to 36 (MGKGAIKEEESEKKRKTWRWPLATLVVVFLAVAVSS). 6 cysteine pairs are disulfide-bonded: C52–C71, C54–C69, C108–C372, C117–C122, C222–C231, and C375–C378. Residues R201, T203, and W214 each coordinate FAD. 4 residues coordinate FAD: S242, H245, R275, and R282. N365 carries N-linked (GlcNAc...) asparagine glycosylation.

It belongs to the EROs family. In terms of assembly, may function both as a monomer and a homodimer. Requires FAD as cofactor. Post-translationally, N-glycosylated.

It is found in the endoplasmic reticulum membrane. Its function is as follows. Essential oxidoreductase that oxidizes proteins in the endoplasmic reticulum to produce disulfide bonds. Acts by oxidizing directly PDI isomerase through a direct disulfide exchange. Does not act as a direct oxidant of folding substrate, but relies on PDI to transfer oxidizing equivalent. Does not oxidize all PDI related proteins, suggesting that it can discriminate between PDI and related proteins. Its reoxidation probably involves electron transfer to molecular oxygen via FAD. Acts independently of glutathione. May be responsible for a significant proportion of reactive oxygen species (ROS) in the cell, thereby being a source of oxidative stress. This is Endoplasmic reticulum oxidoreductin-1 (AERO1) from Arabidopsis thaliana (Mouse-ear cress).